The sequence spans 621 residues: Anthranilate synthase alpha subunit 2, chloroplastic (621 aa).

Residues 1-87 (MSAVSISAVK…SEEQFTKFKK (87 aa)) constitute a chloroplast transit peptide.

This sequence belongs to the anthranilate synthase component I family. Heterotetramer consisting of two non-identical subunits: a beta subunit and a large alpha subunit.

It localises to the plastid. Its subcellular location is the chloroplast. It carries out the reaction chorismate + L-glutamine = anthranilate + pyruvate + L-glutamate + H(+). Its pathway is amino-acid biosynthesis; L-tryptophan biosynthesis; L-tryptophan from chorismate: step 1/5. With respect to regulation, feedback inhibition by tryptophan. In terms of biological role, part of a heterotetrameric complex that catalyzes the two-step biosynthesis of anthranilate, an intermediate in the biosynthesis of L-tryptophan. In the first step, the glutamine-binding beta subunit of anthranilate synthase (AS) provides the glutamine amidotransferase activity which generates ammonia as a substrate that, along with chorismate, is used in the second step, catalyzed by the large alpha subunit of AS to produce anthranilate. This Arabidopsis thaliana (Mouse-ear cress) protein is Anthranilate synthase alpha subunit 2, chloroplastic (ASA2).